The following is a 20-amino-acid chain: Outer membrane protein 40Va (20 aa).

The protein belongs to the Gram-negative porin family. As to quaternary structure, homotrimer.

It is found in the cell outer membrane. Its function is as follows. Forms pores that allow passive diffusion of small molecules across the outer membrane. This chain is Outer membrane protein 40Va, found in Vibrio alginolyticus.